Consider the following 235-residue polypeptide: Phosphoribosylaminoimidazole-succinocarboxamide synthase (235 aa).

The protein belongs to the SAICAR synthetase family.

The enzyme catalyses 5-amino-1-(5-phospho-D-ribosyl)imidazole-4-carboxylate + L-aspartate + ATP = (2S)-2-[5-amino-1-(5-phospho-beta-D-ribosyl)imidazole-4-carboxamido]succinate + ADP + phosphate + 2 H(+). It participates in purine metabolism; IMP biosynthesis via de novo pathway; 5-amino-1-(5-phospho-D-ribosyl)imidazole-4-carboxamide from 5-amino-1-(5-phospho-D-ribosyl)imidazole-4-carboxylate: step 1/2. This is Phosphoribosylaminoimidazole-succinocarboxamide synthase (purC) from Streptococcus pneumoniae serotype 4 (strain ATCC BAA-334 / TIGR4).